Consider the following 161-residue polypeptide: Cytochrome c-type biogenesis protein CcmE (161 aa).

Residues Met1–Arg8 lie on the Cytoplasmic side of the membrane. The helical; Signal-anchor for type II membrane protein transmembrane segment at Leu9–Ala29 threads the bilayer. Over Leu30 to Gln161 the chain is Periplasmic. Positions 124 and 128 each coordinate heme.

The protein belongs to the CcmE/CycJ family.

The protein localises to the cell inner membrane. In terms of biological role, heme chaperone required for the biogenesis of c-type cytochromes. Transiently binds heme delivered by CcmC and transfers the heme to apo-cytochromes in a process facilitated by CcmF and CcmH. This Ectopseudomonas mendocina (strain ymp) (Pseudomonas mendocina) protein is Cytochrome c-type biogenesis protein CcmE.